The following is a 449-amino-acid chain: Keratin, type I cuticular Ha7 (449 aa).

The head stretch occupies residues M1 to E104. The IF rod domain occupies E104–L415. Residues K105–R139 form a coil 1A region. The linker 1 stretch occupies residues S140–D150. Residues Y151 to S251 are coil 1B. The linker 12 stretch occupies residues Q252–I267. Positions D268–E411 are coil 2. The tract at residues P416–R449 is tail.

This sequence belongs to the intermediate filament family.

In Homo sapiens (Human), this protein is Keratin, type I cuticular Ha7 (KRT37).